We begin with the raw amino-acid sequence, 83 residues long: Small ribosomal subunit protein bS20 (83 aa).

This sequence belongs to the bacterial ribosomal protein bS20 family.

In terms of biological role, binds directly to 16S ribosomal RNA. The chain is Small ribosomal subunit protein bS20 from Amoebophilus asiaticus (strain 5a2).